A 754-amino-acid chain; its full sequence is Protein neuralized (754 aa).

In terms of domain architecture, NHR 1 spans Pro-106–Ser-260. Residues Gln-280–Ser-297 are compositionally biased toward low complexity. The interval Gln-280–Leu-308 is disordered. 2 positions are modified to phosphoserine: Ser-338 and Ser-341. The region spanning Pro-368–Gln-523 is the NHR 2 domain. The RING-type zinc-finger motif lies at Cys-701 to Arg-742.

It is found in the nucleus. Involved in neurogenesis. Interacts with other neurogenic proteins in the specification of the neuroblast versus epidermoblast cell fate. This Drosophila melanogaster (Fruit fly) protein is Protein neuralized (neur).